A 369-amino-acid chain; its full sequence is 3-dehydroquinate synthase (369 aa).

Residues 72 to 77 (SGEKEK), 130 to 131 (TT), lysine 142, and lysine 151 contribute to the NAD(+) site. Zn(2+) is bound by residues glutamate 184, histidine 247, and histidine 264.

It belongs to the sugar phosphate cyclases superfamily. Dehydroquinate synthase family. The cofactor is Co(2+). Requires Zn(2+) as cofactor. NAD(+) serves as cofactor.

The protein resides in the cytoplasm. It carries out the reaction 7-phospho-2-dehydro-3-deoxy-D-arabino-heptonate = 3-dehydroquinate + phosphate. Its pathway is metabolic intermediate biosynthesis; chorismate biosynthesis; chorismate from D-erythrose 4-phosphate and phosphoenolpyruvate: step 2/7. In terms of biological role, catalyzes the conversion of 3-deoxy-D-arabino-heptulosonate 7-phosphate (DAHP) to dehydroquinate (DHQ). The polypeptide is 3-dehydroquinate synthase (Bacillus cytotoxicus (strain DSM 22905 / CIP 110041 / 391-98 / NVH 391-98)).